We begin with the raw amino-acid sequence, 284 residues long: Cell division protein DivIB (284 aa).

The disordered stretch occupies residues 1 to 21 (MFGKRKDSKNKAMRDNEELTP). The Cytoplasmic segment spans residues 1 to 63 (MFGKRKDSKN…GLRKRRLQKR (63 aa)). Residues 64 to 84 (VITLASIFGISAIISLYAILP) traverse the membrane as a helical segment. The Extracellular segment spans residues 85-284 (VSRVSNIEIE…VGAYAYPYBK (200 aa)). One can recognise a POTRA domain in the interval 86–156 (SRVSNIEIEG…NVVKFKVTEY (71 aa)).

It belongs to the FtsQ/DivIB family. DivIB subfamily.

The protein resides in the cell membrane. Functionally, cell division protein that may be involved in stabilizing or promoting the assembly of the division complex. The sequence is that of Cell division protein DivIB from Ligilactobacillus salivarius (strain CECT 5713) (Lactobacillus salivarius).